The primary structure comprises 357 residues: MQLKDRHTVEGGRERITLVPESLDDLWHLAYVLEPGDFVAGDTHRRIQRNDDQMRDTGGEREHMFVTIDVGDVEFHKFSNRLRVSGTIEDCSREDQLGLHHTLNVAEREELEVEKHWQPDQLNRLNEAVEATDQPDVAIATVEEGEAHIHVVQQYGVDEQGSFTATTGKGEQNDRGRDELFGTLADALARMQADAIILAGPGFTKQDALDHITEEYPDLQETITMVDTSAVGGRGVHEVLKRGAVEDVQEETRIAEESELIDELTTQMATDGKAAYGIDEVQKAVEFGAVEDLLILDERLRLERAGEGDWVDVDVNDLVRTVEQQGGSVTVFSHEFAPGEQLRNLGGIGAVLRYRLD.

Belongs to the eukaryotic release factor 1 family. Pelota subfamily. In terms of assembly, monomer. A divalent metal cation serves as cofactor.

The protein localises to the cytoplasm. Its function is as follows. May function in recognizing stalled ribosomes, interact with stem-loop structures in stalled mRNA molecules, and effect endonucleolytic cleavage of the mRNA. May play a role in the release non-functional ribosomes and degradation of damaged mRNAs. Has endoribonuclease activity. This Halobacterium salinarum (strain ATCC 29341 / DSM 671 / R1) protein is Protein pelota homolog.